Here is a 723-residue protein sequence, read N- to C-terminus: Polyribonucleotide nucleotidyltransferase (723 aa).

D488 and D494 together coordinate Mg(2+). The KH domain occupies 555 to 614 (PKIITLNIKPEKIKDVIGPGGKQINAIIDETGVKIDIEQDGTVYIASQDQAMNRKAIAII). Residues 624-692 (GEVYTGKVRR…QQGRVNLSRK (69 aa)) enclose the S1 motif domain. The tract at residues 692-723 (KALLEKKEQPEGDKKPQAEKKFYPKTKKPESK) is disordered. A compositionally biased stretch (basic and acidic residues) spans 693-723 (ALLEKKEQPEGDKKPQAEKKFYPKTKKPESK).

It belongs to the polyribonucleotide nucleotidyltransferase family. Mg(2+) is required as a cofactor.

It is found in the cytoplasm. The enzyme catalyses RNA(n+1) + phosphate = RNA(n) + a ribonucleoside 5'-diphosphate. In terms of biological role, involved in mRNA degradation. Catalyzes the phosphorolysis of single-stranded polyribonucleotides processively in the 3'- to 5'-direction. The protein is Polyribonucleotide nucleotidyltransferase of Listeria monocytogenes serovar 1/2a (strain ATCC BAA-679 / EGD-e).